The chain runs to 265 residues: Tryptophan synthase alpha chain (265 aa).

Residues E45 and D56 each act as proton acceptor in the active site.

It belongs to the TrpA family. As to quaternary structure, tetramer of two alpha and two beta chains.

The enzyme catalyses (1S,2R)-1-C-(indol-3-yl)glycerol 3-phosphate + L-serine = D-glyceraldehyde 3-phosphate + L-tryptophan + H2O. It participates in amino-acid biosynthesis; L-tryptophan biosynthesis; L-tryptophan from chorismate: step 5/5. Its function is as follows. The alpha subunit is responsible for the aldol cleavage of indoleglycerol phosphate to indole and glyceraldehyde 3-phosphate. The polypeptide is Tryptophan synthase alpha chain (Halalkalibacterium halodurans (strain ATCC BAA-125 / DSM 18197 / FERM 7344 / JCM 9153 / C-125) (Bacillus halodurans)).